The primary structure comprises 567 residues: Potassium-transporting ATPase potassium-binding subunit (567 aa).

The next 12 membrane-spanning stretches (helical) occupy residues Met-3–Leu-23, Leu-64–Val-84, Gly-136–Ile-156, Leu-179–Pro-199, Val-220–Phe-240, Leu-254–Phe-274, Trp-285–Ala-305, Phe-330–Val-350, Ile-374–Ile-394, Ala-420–Val-440, Leu-488–Gly-508, and Gly-527–Phe-547.

The protein belongs to the KdpA family. In terms of assembly, the system is composed of three essential subunits: KdpA, KdpB and KdpC.

It localises to the cell inner membrane. In terms of biological role, part of the high-affinity ATP-driven potassium transport (or Kdp) system, which catalyzes the hydrolysis of ATP coupled with the electrogenic transport of potassium into the cytoplasm. This subunit binds the periplasmic potassium ions and delivers the ions to the membrane domain of KdpB through an intramembrane tunnel. The chain is Potassium-transporting ATPase potassium-binding subunit from Bradyrhizobium diazoefficiens (strain JCM 10833 / BCRC 13528 / IAM 13628 / NBRC 14792 / USDA 110).